An 821-amino-acid chain; its full sequence is Glycerol-3-phosphate acyltransferase (821 aa).

The HXXXXD motif motif lies at 310 to 315 (CHRSHM).

The protein belongs to the GPAT/DAPAT family.

The protein resides in the cell membrane. It catalyses the reaction sn-glycerol 3-phosphate + an acyl-CoA = a 1-acyl-sn-glycero-3-phosphate + CoA. Its pathway is phospholipid metabolism; CDP-diacylglycerol biosynthesis; CDP-diacylglycerol from sn-glycerol 3-phosphate: step 1/3. The polypeptide is Glycerol-3-phosphate acyltransferase (Baumannia cicadellinicola subsp. Homalodisca coagulata).